Consider the following 120-residue polypeptide: UPF0231 protein YacL (120 aa).

Belongs to the UPF0231 family.

The sequence is that of UPF0231 protein YacL from Salmonella heidelberg (strain SL476).